A 402-amino-acid polypeptide reads, in one-letter code: Putative FBD-associated F-box protein At5g56690 (402 aa).

The F-box domain occupies 1 to 47 (MAEISGLPDDLLVKILAFLPTKVAISTSVLSKQWRFLWMWLPKLKYD). An FBD domain is found at 349–401 (SWSKNQGSVPKCFLNSLETFRVKWYYSEEQEDRDFLSLIFKHARCLKSTSILH).

This chain is Putative FBD-associated F-box protein At5g56690, found in Arabidopsis thaliana (Mouse-ear cress).